We begin with the raw amino-acid sequence, 741 residues long: Protein lin-54 homolog (741 aa).

Residues 513–626 (PRKPCNCTKS…KCIGCKNFEE (114 aa)) enclose the CRC domain. A DNA-binding region spans residues 515 to 528 (KPCNCTKSLCLKLY). Zn(2+) is bound by residues Cys-517, Cys-519, Cys-524, Cys-529, Cys-531, Cys-538, Cys-541, Cys-543, and Cys-546. The linker stretch occupies residues 575-588 (IGKGKEGESDRRHS). Zn(2+) contacts are provided by Cys-591, Cys-593, Cys-598, Cys-603, Cys-605, Cys-612, Cys-616, Cys-618, and Cys-621. Residues 591–604 (CNCKRSGCLKNYCE) are DNA-binding.

It belongs to the lin-54 family. Component of the DREAM complex.

The protein localises to the nucleus. Component of the DREAM complex, a multiprotein complex that can both act as a transcription activator or repressor depending on the context. Specifically recognizes the consensus motif 5'-TTYRAA-3' in target DNA. This Xenopus tropicalis (Western clawed frog) protein is Protein lin-54 homolog (lin54).